A 362-amino-acid polypeptide reads, in one-letter code: Bifunctional chorismate mutase/prephenate dehydratase (362 aa).

The 92-residue stretch at Met1–Lys92 folds into the Chorismate mutase domain. The substrate site is built by Arg8, Arg25, Lys36, and Glu49. One can recognise a Prephenate dehydratase domain in the interval Val93 to Lys267. An ACT domain is found at Ser279–Pro356.

The protein resides in the cytoplasm. The catalysed reaction is chorismate = prephenate. It catalyses the reaction prephenate + H(+) = 3-phenylpyruvate + CO2 + H2O. The protein operates within amino-acid biosynthesis; L-phenylalanine biosynthesis; phenylpyruvate from prephenate: step 1/1. It participates in metabolic intermediate biosynthesis; prephenate biosynthesis; prephenate from chorismate: step 1/1. Catalyzes the Claisen rearrangement of chorismate to prephenate and the decarboxylation/dehydration of prephenate to phenylpyruvate. The polypeptide is Bifunctional chorismate mutase/prephenate dehydratase (pheA) (Aquifex aeolicus (strain VF5)).